A 152-amino-acid chain; its full sequence is Transcription elongation factor Spt5 (152 aa).

The KOW domain occupies 98 to 127 (EGDLVEVVSGPFRGMQAQVVKVTEGKGEVV).

Belongs to the archaeal Spt5 family. Heterodimer composed of Spt4 and Spt5. Interacts with RNA polymerase (RNAP).

Functionally, stimulates transcription elongation. The protein is Transcription elongation factor Spt5 of Acidianus ambivalens (Desulfurolobus ambivalens).